The primary structure comprises 386 residues: Cell division protein FtsZ (386 aa).

Residues 20–24 (GGGGN), 107–109 (GTG), E138, R142, and N186 contribute to the GTP site. The tract at residues 350–377 (LNQEQKTAAKAVNEQNAQGSKEPDYLDI) is disordered.

This sequence belongs to the FtsZ family. As to quaternary structure, homodimer. Polymerizes to form a dynamic ring structure in a strictly GTP-dependent manner. Interacts directly with several other division proteins.

Its subcellular location is the cytoplasm. Its function is as follows. Essential cell division protein that forms a contractile ring structure (Z ring) at the future cell division site. The regulation of the ring assembly controls the timing and the location of cell division. One of the functions of the FtsZ ring is to recruit other cell division proteins to the septum to produce a new cell wall between the dividing cells. Binds GTP and shows GTPase activity. The polypeptide is Cell division protein FtsZ (Sodalis glossinidius).